Reading from the N-terminus, the 321-residue chain is Ribosomal RNA small subunit methyltransferase H (321 aa).

S-adenosyl-L-methionine-binding positions include 40 to 42 (GGH), D60, F84, D106, and Q113.

It belongs to the methyltransferase superfamily. RsmH family.

It is found in the cytoplasm. It catalyses the reaction cytidine(1402) in 16S rRNA + S-adenosyl-L-methionine = N(4)-methylcytidine(1402) in 16S rRNA + S-adenosyl-L-homocysteine + H(+). Its function is as follows. Specifically methylates the N4 position of cytidine in position 1402 (C1402) of 16S rRNA. This is Ribosomal RNA small subunit methyltransferase H from Haemophilus influenzae (strain ATCC 51907 / DSM 11121 / KW20 / Rd).